The sequence spans 339 residues: 2-halobenzoate 1,2-dioxygenase electron transfer component (339 aa).

One can recognise a 2Fe-2S ferredoxin-type domain in the interval 3–96 (HSIALRFEDD…DCVVRILASS (94 aa)). [2Fe-2S] cluster-binding residues include Cys-40, Cys-45, Cys-48, and Cys-80. A ferredoxin-reductase region spans residues 98 to 336 (ACQVKKSTMT…NFYFEKFAPT (239 aa)). The region spanning 103–203 (KSTMTGQMTE…DGPYGAFYLR (101 aa)) is the FAD-binding FR-type domain.

The protein belongs to the bacterial ring-hydroxylating dioxygenase ferredoxin reductase family. In terms of assembly, monomer. It is part of 2-halobenzoate dioxygenase two component enzyme system. The other component is a dioxygenase component consisting of 3 large (CbdA) subunits and 3 small (CbdB) subunits. Requires FAD as cofactor. It depends on [2Fe-2S] cluster as a cofactor.

It carries out the reaction 2 reduced [2Fe-2S]-[ferredoxin] + NAD(+) + H(+) = 2 oxidized [2Fe-2S]-[ferredoxin] + NADH. It participates in xenobiotic degradation; benzoate degradation via CoA ligation. In terms of biological role, electron transfer component of 2-halobenzoate 1,2-dioxygenase system. The sequence is that of 2-halobenzoate 1,2-dioxygenase electron transfer component (cbdC) from Burkholderia cepacia (Pseudomonas cepacia).